The following is a 71-amino-acid chain: uncharacterized protein (71 aa).

The 55-residue stretch at 5–59 (IKEFRAKFNMTQEELAKRVGVRRETIVFLEKGKYNPSLKLAYKIARVFNAKIEDI) folds into the HTH cro/C1-type domain. The segment at residues 16-35 (QEELAKRVGVRRETIVFLEK) is a DNA-binding region (H-T-H motif).

This is an uncharacterized protein from Archaeoglobus fulgidus (strain ATCC 49558 / DSM 4304 / JCM 9628 / NBRC 100126 / VC-16).